A 169-amino-acid chain; its full sequence is Peptide deformylase (169 aa).

Cysteine 91 and histidine 133 together coordinate Fe cation. Residue glutamate 134 is part of the active site. Histidine 137 is a binding site for Fe cation.

It belongs to the polypeptide deformylase family. Fe(2+) is required as a cofactor.

The enzyme catalyses N-terminal N-formyl-L-methionyl-[peptide] + H2O = N-terminal L-methionyl-[peptide] + formate. Its function is as follows. Removes the formyl group from the N-terminal Met of newly synthesized proteins. Requires at least a dipeptide for an efficient rate of reaction. N-terminal L-methionine is a prerequisite for activity but the enzyme has broad specificity at other positions. This is Peptide deformylase from Citrobacter koseri (strain ATCC BAA-895 / CDC 4225-83 / SGSC4696).